The sequence spans 65 residues: Large ribosomal subunit protein bL32 (65 aa).

Over residues 1 to 18 (MAVPKRRHSKSRTRKRRS) the composition is skewed to basic residues. A disordered region spans residues 1-20 (MAVPKRRHSKSRTRKRRSTY).

Belongs to the bacterial ribosomal protein bL32 family.

The sequence is that of Large ribosomal subunit protein bL32 from Salinibacter ruber (strain DSM 13855 / M31).